The chain runs to 152 residues: SsrA-binding protein (152 aa).

The interval 124–152 (KKLHDKRDTAAERDWQRDKARLMKGDRGD) is disordered. A compositionally biased stretch (basic and acidic residues) spans 128–152 (DKRDTAAERDWQRDKARLMKGDRGD).

Belongs to the SmpB family.

It localises to the cytoplasm. In terms of biological role, required for rescue of stalled ribosomes mediated by trans-translation. Binds to transfer-messenger RNA (tmRNA), required for stable association of tmRNA with ribosomes. tmRNA and SmpB together mimic tRNA shape, replacing the anticodon stem-loop with SmpB. tmRNA is encoded by the ssrA gene; the 2 termini fold to resemble tRNA(Ala) and it encodes a 'tag peptide', a short internal open reading frame. During trans-translation Ala-aminoacylated tmRNA acts like a tRNA, entering the A-site of stalled ribosomes, displacing the stalled mRNA. The ribosome then switches to translate the ORF on the tmRNA; the nascent peptide is terminated with the 'tag peptide' encoded by the tmRNA and targeted for degradation. The ribosome is freed to recommence translation, which seems to be the essential function of trans-translation. This chain is SsrA-binding protein, found in Caulobacter vibrioides (strain ATCC 19089 / CIP 103742 / CB 15) (Caulobacter crescentus).